The following is a 270-amino-acid chain: MVLLKEYRVILPVSVDEYQVGQLYSVAEASKNETGGGEGVEVLVNEPYEKDGEKGQYTHKIYHLQSKVPTFVRMLAPEGALNIHEKAWNAYPYCRTVITNEYMKEDFLIKIETWHKPDLGTQENVHKLEPEAWKHVEAVYIDIADRSQVLSKDYKAEEDPAKFKSIKTGRGPLGPNWKQELVNQKDCPYMCAYKLVTVKFKWWGLQNKVENFIHKQERRLFTNFHRQLFCWLDKWVDLTMDDIRRMEEETKRQLDEMRQKDPVKGMTADD.

A 1,2-diacyl-sn-glycero-3-phospho-(1D-myo-inositol) is bound by residues T58, K60, E85, N89, T96, and K194. K215 carries the N6-acetyllysine modification. Residues 250-263 are compositionally biased toward basic and acidic residues; the sequence is TKRQLDEMRQKDPV. The segment at 250 to 270 is disordered; the sequence is TKRQLDEMRQKDPVKGMTADD.

Belongs to the PtdIns transfer protein family. PI transfer class I subfamily.

It localises to the cytoplasm. It is found in the nucleus. The enzyme catalyses a 1,2-diacyl-sn-glycero-3-phosphocholine(in) = a 1,2-diacyl-sn-glycero-3-phosphocholine(out). It carries out the reaction a 1,2-diacyl-sn-glycero-3-phospho-(1D-myo-inositol)(in) = a 1,2-diacyl-sn-glycero-3-phospho-(1D-myo-inositol)(out). With respect to regulation, phosphatidylinositol transfer activity is inhibited by N-ethylmaleimide. In terms of biological role, catalyzes the transfer of phosphatidylinositol (PI) and phosphatidylcholine (PC) between membranes. Shows a preference for PI and PC containing shorter saturated or monosaturated acyl chains at the sn-1 and sn-2 positions. Preference order for PC is C16:1 &gt; C16:0 &gt; C18:1 &gt; C18:0 &gt; C20:4 and for PI is C16:1 &gt; C16:0 &gt; C18:1 &gt; C18:0 &gt; C20:4 &gt; C20:3. In Homo sapiens (Human), this protein is Phosphatidylinositol transfer protein alpha isoform (PITPNA).